A 97-amino-acid chain; its full sequence is MKSLLLGAIWLYQKVLSPWIGNQCRFYPTCSEYARQAVETHGSLRGSALAAKRLCKCHPWHPGGFDYVPGAVPGAEPDQEQHQCTPLCNHHSEDHSQ.

Residues 72 to 97 (VPGAEPDQEQHQCTPLCNHHSEDHSQ) form a disordered region.

It belongs to the UPF0161 family.

It localises to the cell inner membrane. Could be involved in insertion of integral membrane proteins into the membrane. The sequence is that of Putative membrane protein insertion efficiency factor from Alcanivorax borkumensis (strain ATCC 700651 / DSM 11573 / NCIMB 13689 / SK2).